Here is an 88-residue protein sequence, read N- to C-terminus: Small ribosomal subunit protein bS16 (88 aa).

The protein belongs to the bacterial ribosomal protein bS16 family.

In Symbiobacterium thermophilum (strain DSM 24528 / JCM 14929 / IAM 14863 / T), this protein is Small ribosomal subunit protein bS16.